We begin with the raw amino-acid sequence, 178 residues long: uncharacterized protein (178 aa).

The protein belongs to the mimivirus L114/R131 family.

This is an uncharacterized protein from Acanthamoeba polyphaga mimivirus (APMV).